Reading from the N-terminus, the 2604-residue chain is Probable polyketide synthase 17 (2604 aa).

In terms of domain architecture, Ketosynthase family 3 (KS3) spans Asn-11–Glu-433. Active-site for beta-ketoacyl synthase activity residues include Cys-179, His-316, and His-356. The segment at Gly-631–Tyr-664 is acyl/malonyl transferases. The active-site For acyl/malonyl transferase activity is the Ser-641. The N-terminal hotdog fold stretch occupies residues Asn-937 to Pro-1057. One can recognise a PKS/mFAS DH domain in the interval Asn-937–Gln-1216. His-968 (proton acceptor; for dehydratase activity) is an active-site residue. Residues Ser-1072 to Gln-1216 are C-terminal hotdog fold. Asp-1132 (proton donor; for dehydratase activity) is an active-site residue. Residues Gly-1357–Asn-1407 are disordered. Residues Ser-1363–Ser-1390 are compositionally biased toward low complexity. The Carrier domain maps to Gly-2507–Ser-2584. An O-(pantetheine 4'-phosphoryl)serine modification is found at Ser-2544. The span at Ser-2581–Lys-2597 shows a compositional bias: low complexity. A disordered region spans residues Ser-2581 to Thr-2604.

Requires pantetheine 4'-phosphate as cofactor.

Probable polyketide synthase. The polypeptide is Probable polyketide synthase 17 (pks17) (Dictyostelium discoideum (Social amoeba)).